The primary structure comprises 83 residues: Small ribosomal subunit protein bS20 (83 aa).

The protein belongs to the bacterial ribosomal protein bS20 family.

Functionally, binds directly to 16S ribosomal RNA. The chain is Small ribosomal subunit protein bS20 from Amoebophilus asiaticus (strain 5a2).